The following is a 162-amino-acid chain: 2-C-methyl-D-erythritol 2,4-cyclodiphosphate synthase (162 aa).

2 residues coordinate a divalent metal cation: Asp8 and His10. 4-CDP-2-C-methyl-D-erythritol 2-phosphate contacts are provided by residues 8–10 and 36–37; these read DVH and HS. His44 is a binding site for a divalent metal cation. 4-CDP-2-C-methyl-D-erythritol 2-phosphate-binding positions include 58 to 60, 63 to 67, 102 to 108, 134 to 137, Phe141, and Arg144; these read DIG, FPDTD, AQAPKMA, and TTTE.

This sequence belongs to the IspF family. Homotrimer. The cofactor is a divalent metal cation.

It catalyses the reaction 4-CDP-2-C-methyl-D-erythritol 2-phosphate = 2-C-methyl-D-erythritol 2,4-cyclic diphosphate + CMP. It functions in the pathway isoprenoid biosynthesis; isopentenyl diphosphate biosynthesis via DXP pathway; isopentenyl diphosphate from 1-deoxy-D-xylulose 5-phosphate: step 4/6. Involved in the biosynthesis of isopentenyl diphosphate (IPP) and dimethylallyl diphosphate (DMAPP), two major building blocks of isoprenoid compounds. Catalyzes the conversion of 4-diphosphocytidyl-2-C-methyl-D-erythritol 2-phosphate (CDP-ME2P) to 2-C-methyl-D-erythritol 2,4-cyclodiphosphate (ME-CPP) with a corresponding release of cytidine 5-monophosphate (CMP). The protein is 2-C-methyl-D-erythritol 2,4-cyclodiphosphate synthase of Yersinia pseudotuberculosis serotype O:1b (strain IP 31758).